The sequence spans 1539 residues: MEPGCDEFLPPPECPVFEPSWAEFQDPLGYIAKIRPIAEKSGICKIRPPADWQPPFAVEVDNFRFTPRVQRLNELEAQTRVKLNYLDQIAKFWEIQGSSLKIPNVERKILDLYSLSKIVIEEGGYEAICKDRRWARVAQRLHYPPGKNIGSLLRSHYERIIYPYEMFQSGANHVQCNTHPFDNEVKDKEYKPHSIPLRQSVQPSKFSSYSRRAKRLQPDPEPTEEDIEKHPELKKLQIYGPGPKMMGLGLMAKDKDKTVHKKVTCPPTVTVKDEQSGGGNVSSTLLKQHLSLEPCTKTTMQLRKNHSSAQFIDSYICQVCSRGDEDDKLLFCDGCDDNYHIFCLLPPLPEIPRGIWRCPKCILAECKQPPEAFGFEQATQEYSLQSFGEMADSFKSDYFNMPVHMVPTELVEKEFWRLVSSIEEDVTVEYGADIHSKEFGSGFPVSNSKQNLSPEEKEYATSGWNLNVMPVLDQSVLCHINADISGMKVPWLYVGMVFSAFCWHIEDHWSYSINYLHWGEPKTWYGVPSLAAEHLEEVMKMLTPELFDSQPDLLHQLVTLMNPNTLMSHGVPVVRTNQCAGEFVITFPRAYHSGFNQGYNFAEAVNFCTADWLPAGRQCIEHYRRLRRYCVFSHEELICKMAAFPETLDLNLAVAVHKEMFIMVQEERRLRKALLEKGVTEAEREAFELLPDDERQCIKCKTTCFLSALACYDCPDGLVCLSHINDLCKCSSSRQYLRYRYTLDELPTMLHKLKIRAESFDTWANKVRVALEVEDGRKRSFEELRALESEARERRFPNSELLQRLKNCLSEVEACIAQVLGLVSGQVARMDTPQLTLTELRVLLEQMGSLPCAMHQIGDVKDVLEQVEAYQAEAREALATLPSSPGLLRSLLERGQQLGVEVPEAHQLQQQVEQAQWLDEVKQALAPSAHRGSLVIMQGLLVMGAKIASSPSVDKARAELQELLTIAERWEEKAHFCLEARQKHPPATLEAIIRETENIPVHLPNIQALKEALTKAQAWIADVDEIQNGDHYPCLDDLEGLVAVGRDLPVGLEELRQLELQVLTAHSWREKASKTFLKKNSCYTLLEVLCPCADAGSDSTKRSRWMEKALGLYQCDTELLGLSAQDLRDPGSVIVAFKEGEQKEKEGILQLRRTNSAKPSPLAPSLMASSPTSICVCGQVPAGVGVLQCDLCQDWFHGQCVSVPHLLTSPKPSLTSSPLLAWWEWDTKFLCPLCMRSRRPRLETILALLVALQRLPVRLPEGEALQCLTERAIGWQDRARKALASEDVTALLRQLAELRQQLQAKPRPEEASVYTSATACDPIREGSGNNISKVQGLLENGDSVTSPENMAPGKGSDLELLSSLLPQLTGPVLELPEAIRAPLEELMMEGDLLEVTLDENHSIWQLLQAGQPPDLDRIRTLLELEKFEHQGSRTRSRALERRRRRQKVDQGRNVENLVQQELQSKRARSSGIMSQVGREEEHYQEKADRENMFLTPSTDHSPFLKGNQNSLQHKDSGSSAACPSLMPLLQLSYSDEQQL.

Residues 14–55 (CPVFEPSWAEFQDPLGYIAKIRPIAEKSGICKIRPPADWQPP) enclose the JmjN domain. In terms of domain architecture, ARID spans 79-169 (TRVKLNYLDQ…IIYPYEMFQS (91 aa)). Residues 192–228 (PHSIPLRQSVQPSKFSSYSRRAKRLQPDPEPTEEDIE) are disordered. Over residues 197 to 210 (LRQSVQPSKFSSYS) the composition is skewed to polar residues. Residues Lys205, Lys229, Lys244, and Lys272 each participate in a glycyl lysine isopeptide (Lys-Gly) (interchain with G-Cter in SUMO2) cross-link. 2 positions are modified to phosphoserine: Ser291 and Ser307. The PHD-type 1 zinc finger occupies 316–362 (ICQVCSRGDEDDKLLFCDGCDDNYHIFCLLPPLPEIPRGIWRCPKCI). A 2-oxoglutarate-binding site is contributed by Tyr430. The JmjC domain occupies 458-624 (EYATSGWNLN…AGRQCIEHYR (167 aa)). Fe cation-binding residues include His504 and Glu506. 3 residues coordinate 2-oxoglutarate: Ser512, Asn514, and Lys522. His592 serves as a coordination point for Fe cation. Residues 697–749 (CIKCKTTCFLSALACYDCPDGLVCLSHINDLCKCSSSRQYLRYRYTLDELPTM) form a C5HC2 zinc finger. Ser884 bears the Phosphoserine mark. The PHD-type 2 zinc-finger motif lies at 1174 to 1235 (ICVCGQVPAG…DTKFLCPLCM (62 aa)). The residue at position 1346 (Ser1346) is a Phosphoserine. The interval 1429–1521 (HQGSRTRSRA…QHKDSGSSAA (93 aa)) is disordered. Residues 1432–1446 (SRTRSRALERRRRRQ) show a composition bias toward basic residues. The span at 1477–1491 (GREEEHYQEKADREN) shows a compositional bias: basic and acidic residues. Over residues 1494-1521 (LTPSTDHSPFLKGNQNSLQHKDSGSSAA) the composition is skewed to polar residues.

The protein belongs to the JARID1 histone demethylase family. As to quaternary structure, interacts with PCGF6, MSH5, ZMYND8, AR. The cofactor is L-ascorbate. It depends on Fe(2+) as a cofactor. Expression is highly down-regulated in metastatic prostate tumors.

It is found in the nucleus. The catalysed reaction is N(6),N(6),N(6)-trimethyl-L-lysyl(4)-[histone H3] + 3 2-oxoglutarate + 3 O2 = L-lysyl(4)-[histone H3] + 3 formaldehyde + 3 succinate + 3 CO2. In terms of biological role, histone demethylase that specifically demethylates 'Lys-4' of histone H3, thereby playing a central role in histone code. Does not demethylate histone H3 'Lys-9', H3 'Lys-27', H3 'Lys-36', H3 'Lys-79' or H4 'Lys-20'. Demethylates trimethylated and dimethylated but not monomethylated H3 'Lys-4'. May play a role in spermatogenesis. Involved in transcriptional repression of diverse metastasis-associated genes; in this function seems to cooperate with ZMYND8. Suppresses prostate cancer cell invasion. Regulates androgen receptor (AR) transcriptional activity by demethylating H3K4me3 active transcription marks. The sequence is that of Lysine-specific demethylase 5D (KDM5D) from Homo sapiens (Human).